The following is a 115-amino-acid chain: UPF0102 protein SYO3AOP1_0546 (115 aa).

The protein belongs to the UPF0102 family.

This is UPF0102 protein SYO3AOP1_0546 from Sulfurihydrogenibium sp. (strain YO3AOP1).